A 116-amino-acid chain; its full sequence is Putative iron-sulfur cluster insertion protein ErpA (116 aa).

Iron-sulfur cluster-binding residues include Cys-44, Cys-108, and Cys-110.

The protein belongs to the HesB/IscA family. In terms of assembly, homodimer. The cofactor is iron-sulfur cluster.

Its function is as follows. Required for insertion of 4Fe-4S clusters. This Thiobacillus denitrificans (strain ATCC 25259 / T1) protein is Putative iron-sulfur cluster insertion protein ErpA.